Reading from the N-terminus, the 487-residue chain is Chromosomal replication initiator protein DnaA (487 aa).

Positions 1-79 are domain I, interacts with DnaA modulators; sequence MEKSKNIWSL…GYNNIVIVFT (79 aa). Residues 79–142 are domain II; it reads TNQPPKTHSN…EEEPTNFKNP (64 aa). The segment at 143-359 is domain III, AAA+ region; it reads FLKKRYTFEN…AAVTKLKAYI (217 aa). Positions 187, 189, 190, and 191 each coordinate ATP. The segment at 360 to 487 is domain IV, binds dsDNA; that stretch reads DLDNIEIDIE…TELMNKIKKN (128 aa).

The protein belongs to the DnaA family. In terms of assembly, oligomerizes as a right-handed, spiral filament on DNA at oriC.

It localises to the cytoplasm. In terms of biological role, plays an essential role in the initiation and regulation of chromosomal replication. ATP-DnaA binds to the origin of replication (oriC) to initiate formation of the DNA replication initiation complex once per cell cycle. Binds the DnaA box (a 9 base pair repeat at the origin) and separates the double-stranded (ds)DNA. Forms a right-handed helical filament on oriC DNA; dsDNA binds to the exterior of the filament while single-stranded (ss)DNA is stabiized in the filament's interior. The ATP-DnaA-oriC complex binds and stabilizes one strand of the AT-rich DNA unwinding element (DUE), permitting loading of DNA polymerase. After initiation quickly degrades to an ADP-DnaA complex that is not apt for DNA replication. Binds acidic phospholipids. This is Chromosomal replication initiator protein DnaA from Borreliella burgdorferi (strain ZS7) (Borrelia burgdorferi).